Here is a 295-residue protein sequence, read N- to C-terminus: Aspartate carbamoyltransferase catalytic subunit (295 aa).

Carbamoyl phosphate contacts are provided by Arg49 and Thr50. Lys77 is an L-aspartate binding site. Residues Arg99, His127, and Gln130 each coordinate carbamoyl phosphate. L-aspartate is bound by residues Arg161 and Arg212. The carbamoyl phosphate site is built by Gly251 and Pro252.

This sequence belongs to the aspartate/ornithine carbamoyltransferase superfamily. ATCase family. As to quaternary structure, heterododecamer (2C3:3R2) of six catalytic PyrB chains organized as two trimers (C3), and six regulatory PyrI chains organized as three dimers (R2).

The enzyme catalyses carbamoyl phosphate + L-aspartate = N-carbamoyl-L-aspartate + phosphate + H(+). It participates in pyrimidine metabolism; UMP biosynthesis via de novo pathway; (S)-dihydroorotate from bicarbonate: step 2/3. Catalyzes the condensation of carbamoyl phosphate and aspartate to form carbamoyl aspartate and inorganic phosphate, the committed step in the de novo pyrimidine nucleotide biosynthesis pathway. This Campylobacter jejuni subsp. doylei (strain ATCC BAA-1458 / RM4099 / 269.97) protein is Aspartate carbamoyltransferase catalytic subunit.